Reading from the N-terminus, the 361-residue chain is S-adenosylmethionine:tRNA ribosyltransferase-isomerase (361 aa).

This sequence belongs to the QueA family. In terms of assembly, monomer.

It is found in the cytoplasm. The catalysed reaction is 7-aminomethyl-7-carbaguanosine(34) in tRNA + S-adenosyl-L-methionine = epoxyqueuosine(34) in tRNA + adenine + L-methionine + 2 H(+). Its pathway is tRNA modification; tRNA-queuosine biosynthesis. Its function is as follows. Transfers and isomerizes the ribose moiety from AdoMet to the 7-aminomethyl group of 7-deazaguanine (preQ1-tRNA) to give epoxyqueuosine (oQ-tRNA). This Glaesserella parasuis serovar 5 (strain SH0165) (Haemophilus parasuis) protein is S-adenosylmethionine:tRNA ribosyltransferase-isomerase.